We begin with the raw amino-acid sequence, 124 residues long: Large ribosomal subunit protein bL12 (124 aa).

The protein belongs to the bacterial ribosomal protein bL12 family. As to quaternary structure, homodimer. Part of the ribosomal stalk of the 50S ribosomal subunit. Forms a multimeric L10(L12)X complex, where L10 forms an elongated spine to which 2 to 4 L12 dimers bind in a sequential fashion. Binds GTP-bound translation factors.

Functionally, forms part of the ribosomal stalk which helps the ribosome interact with GTP-bound translation factors. Is thus essential for accurate translation. This Azobacteroides pseudotrichonymphae genomovar. CFP2 protein is Large ribosomal subunit protein bL12.